A 384-amino-acid polypeptide reads, in one-letter code: tRNA-specific 2-thiouridylase MnmA (384 aa).

ATP is bound by residues 30 to 37 and M56; that span reads GMSGGVDS. The tract at residues 116–118 is interaction with target base in tRNA; that stretch reads NPD. C121 functions as the Nucleophile in the catalytic mechanism. C121 and C218 are joined by a disulfide. G146 contributes to the ATP binding site. The interaction with tRNA stretch occupies residues 168 to 170; that stretch reads KDQ. Catalysis depends on C218, which acts as the Cysteine persulfide intermediate. Residues 330–331 form an interaction with tRNA region; that stretch reads RY.

The protein belongs to the MnmA/TRMU family.

It localises to the cytoplasm. It catalyses the reaction S-sulfanyl-L-cysteinyl-[protein] + uridine(34) in tRNA + AH2 + ATP = 2-thiouridine(34) in tRNA + L-cysteinyl-[protein] + A + AMP + diphosphate + H(+). In terms of biological role, catalyzes the 2-thiolation of uridine at the wobble position (U34) of tRNA, leading to the formation of s(2)U34. The chain is tRNA-specific 2-thiouridylase MnmA from Haemophilus ducreyi (strain 35000HP / ATCC 700724).